The sequence spans 216 residues: Ribonuclease HII (216 aa).

Residues 33–216 enclose the RNase H type-2 domain; sequence WPVAGADEAG…RMSFRPFRQV (184 aa). The a divalent metal cation site is built by D39, E40, and D130.

It belongs to the RNase HII family. The cofactor is Mn(2+). Mg(2+) is required as a cofactor.

It localises to the cytoplasm. The enzyme catalyses Endonucleolytic cleavage to 5'-phosphomonoester.. Functionally, endonuclease that specifically degrades the RNA of RNA-DNA hybrids. The protein is Ribonuclease HII of Rhizobium meliloti (strain 1021) (Ensifer meliloti).